The chain runs to 340 residues: Meiotic recombination protein DMC1/LIM15 homolog (340 aa).

126–133 (GEFRTGKT) serves as a coordination point for ATP. A dsDNA-binding site is contributed by arginine 230. SsDNA contacts are provided by arginine 230, phenylalanine 233, arginine 236, arginine 242, and arginine 311. 2 residues coordinate dsDNA: arginine 236 and arginine 242.

Belongs to the RecA family. DMC1 subfamily. In terms of assembly, double stacked ring-shaped homooctamer. Interacts with BRCA2. Interacts with the MND1-PSMC3IP heterodimer. Interacts with RAD51AP1; the interaction is direct and stimulates DMC1-mediated homologous recombination. In terms of tissue distribution, testis.

It localises to the nucleus. The protein resides in the chromosome. Participates in meiotic recombination, specifically in homologous strand assimilation, which is required for the resolution of meiotic double-strand breaks. In Mus musculus (Mouse), this protein is Meiotic recombination protein DMC1/LIM15 homolog.